The chain runs to 96 residues: Neutrophil defensin 1 (96 aa).

The N-terminal stretch at 1–19 (MRTLVILAAILLVALQAQA) is a signal peptide. The propeptide occupies 20–66 (EPLQARTDEATAAQEQIPTDNPEVVVSLAWDESLAPKDSVPGLRKNM). 3 disulfide bridges follow: Cys68/Cys96, Cys70/Cys85, and Cys75/Cys95. Position 87 is a phosphotyrosine (Tyr87).

Tetramer. Dimer. Interacts with RETN. ADP-ribosylation drastically reduces cytotoxic and antibacterial activities, and enhances IL8 production.

The protein localises to the secreted. Effector molecule of the innate immune system that acts via antibiotic-like properties against a broad array of infectious agents including bacteria, fungi, and viruses or by promoting the activation and maturation of some APCs. Interacts with the essential precursor of cell wall synthesis lipid II to inhibit bacterial cell wall synthesis. Inhibits adenovirus infection via inhibition of viral disassembly at the vertex region, thereby restricting the release of internal capsid protein pVI, which is required for endosomal membrane penetration during cell entry. In addition, interaction with adenovirus capsid leads to the redirection of viral particles to TLR4 thereby promoting a NLRP3-mediated inflammasome response and interleukin 1-beta (IL-1beta) release. Induces the production of proinflammatory cytokines including type I interferon (IFN) in plasmacytoid dendritic cells (pDCs) by triggering the degradation of NFKBIA and nuclear translocation of IRF1, both of which are required for activation of pDCs. The chain is Neutrophil defensin 1 from Macaca mulatta (Rhesus macaque).